The chain runs to 502 residues: Cysteine--tRNA ligase (502 aa).

Position 30 (C30) interacts with Zn(2+). Residues 32-42 (PTIYDYAHIGN) carry the 'HIGH' region motif. C224, H263, and E267 together coordinate Zn(2+). The 'KMSKS' region signature appears at 296–300 (KMSKS). ATP is bound at residue K299.

This sequence belongs to the class-I aminoacyl-tRNA synthetase family. Monomer. The cofactor is Zn(2+).

It is found in the cytoplasm. The catalysed reaction is tRNA(Cys) + L-cysteine + ATP = L-cysteinyl-tRNA(Cys) + AMP + diphosphate. The protein is Cysteine--tRNA ligase of Bartonella quintana (strain Toulouse) (Rochalimaea quintana).